Reading from the N-terminus, the 633-residue chain is Threonine--tRNA ligase (633 aa).

The TGS domain maps to 1-61 (MINVYFSDNS…TEDCKFEVIT (61 aa)). The segment at 242-533 (DHRKIGKELE…LIEHHSGKLP (292 aa)) is catalytic. The Zn(2+) site is built by C333, H384, and H510.

Belongs to the class-II aminoacyl-tRNA synthetase family. As to quaternary structure, homodimer. The cofactor is Zn(2+).

Its subcellular location is the cytoplasm. It catalyses the reaction tRNA(Thr) + L-threonine + ATP = L-threonyl-tRNA(Thr) + AMP + diphosphate + H(+). Catalyzes the attachment of threonine to tRNA(Thr) in a two-step reaction: L-threonine is first activated by ATP to form Thr-AMP and then transferred to the acceptor end of tRNA(Thr). Also edits incorrectly charged L-seryl-tRNA(Thr). In Ehrlichia ruminantium (strain Gardel), this protein is Threonine--tRNA ligase.